The following is a 731-amino-acid chain: Alpha-1,4-glucan:maltose-1-phosphate maltosyltransferase (731 aa).

Over residues 1 to 10 the composition is skewed to basic and acidic residues; it reads MEAQHNETEA. A disordered region spans residues 1-31; the sequence is MEAQHNETEAAGKPAAKKTTRTRKPRASKQA. A compositionally biased stretch (basic residues) spans 15-27; it reads AAKKTTRTRKPRA. Positions 321, 381, and 416 each coordinate alpha-maltose 1-phosphate. Asp-451 functions as the Nucleophile in the catalytic mechanism. Residue Asn-452 coordinates alpha-maltose 1-phosphate. Catalysis depends on Glu-480, which acts as the Proton donor. 590-591 serves as a coordination point for alpha-maltose 1-phosphate; that stretch reads KF.

The protein belongs to the glycosyl hydrolase 13 family. GlgE subfamily. As to quaternary structure, homodimer.

It catalyses the reaction alpha-maltose 1-phosphate + [(1-&gt;4)-alpha-D-glucosyl](n) = [(1-&gt;4)-alpha-D-glucosyl](n+2) + phosphate. Maltosyltransferase that uses maltose 1-phosphate (M1P) as the sugar donor to elongate linear or branched alpha-(1-&gt;4)-glucans. Is involved in a branched alpha-glucan biosynthetic pathway from trehalose, together with TreS, Mak and GlgB. The sequence is that of Alpha-1,4-glucan:maltose-1-phosphate maltosyltransferase from Bifidobacterium animalis subsp. lactis (strain Bl-04 / DGCC2908 / RB 4825 / SD5219).